A 183-amino-acid chain; its full sequence is MGVRVHVVAASALLYFILLSGTRCEENCGNPEHCLTTDWVHLWYIWLLVVIGALLLLCGLTSLCFRCCCLSRQQNGEDGGPPPCEVTVIAFDHDSTLQSTITSLQSVFGPAARRILAVAHSHSSLGQLPSSLDTLPGYEEALHMSRFTVAMCGQKAPDLPPVPEEKQLPPTEKESTRIVDSWN.

Residues 1–24 (MGVRVHVVAASALLYFILLSGTRC) form the signal peptide. A helical membrane pass occupies residues 40–60 (VHLWYIWLLVVIGALLLLCGL). The disordered stretch occupies residues 158–183 (DLPPVPEEKQLPPTEKESTRIVDSWN). Over residues 163 to 177 (PEEKQLPPTEKESTR) the composition is skewed to basic and acidic residues.

The protein resides in the membrane. In Homo sapiens (Human), this protein is Transmembrane protein 52B (TMEM52B).